The sequence spans 101 residues: Small ribosomal subunit protein bS18c (101 aa).

Residues 1–19 (MDKSKRLFRKSKRSFRRRL) show a composition bias toward basic residues. Positions 1–23 (MDKSKRLFRKSKRSFRRRLPPIG) are disordered.

This sequence belongs to the bacterial ribosomal protein bS18 family. In terms of assembly, part of the 30S ribosomal subunit.

The protein resides in the plastid. The protein localises to the chloroplast. This Liriodendron tulipifera (Tuliptree) protein is Small ribosomal subunit protein bS18c.